We begin with the raw amino-acid sequence, 364 residues long: MMLERTTAAIGPLDEQAMATAADLQSRLTKPAGSLGVLEELSVRLAGLAGVCPPPLPEPAAVAVFAGDHGVHAQGVTPWPQEVTGQMIGNFLAGGAVVNAFARQTGATVTVVDVGVAAPPTSIETAPPESATASGARPRLVEANIRRGTRDLTVTAALTRDEARAAVETGIRVADELVDAGAAILLTGDMGIGNTTPAAALIAVFAEADPATVTGRGTGVDDPTHQRKIEVVRAALRRHEPDPADPLGVLAAVGGLEHAALAGLILGAAAQRVPVLLDGVIADSAALAAAAFAPSATGAMVAGHRSVEPGATVALRRLGLTPLVDLGLRLGEGTGALLALPVVAGAVRVLHEVATFDSAGVAQK.

Catalysis depends on E332, which acts as the Proton acceptor.

The protein belongs to the CobT family.

It carries out the reaction 5,6-dimethylbenzimidazole + nicotinate beta-D-ribonucleotide = alpha-ribazole 5'-phosphate + nicotinate + H(+). It participates in nucleoside biosynthesis; alpha-ribazole biosynthesis; alpha-ribazole from 5,6-dimethylbenzimidazole: step 1/2. In terms of biological role, catalyzes the synthesis of alpha-ribazole-5'-phosphate from nicotinate mononucleotide (NAMN) and 5,6-dimethylbenzimidazole (DMB). In Salinispora tropica (strain ATCC BAA-916 / DSM 44818 / JCM 13857 / NBRC 105044 / CNB-440), this protein is Nicotinate-nucleotide--dimethylbenzimidazole phosphoribosyltransferase.